The primary structure comprises 431 residues: Glutamate--tRNA ligase 1 (431 aa).

The 'HIGH' region signature appears at 6-16 (PSPTGDMHIGN). Positions 235-239 (KMSKR) match the 'KMSKS' region motif. Lysine 238 lines the ATP pocket.

It belongs to the class-I aminoacyl-tRNA synthetase family. Glutamate--tRNA ligase type 1 subfamily. In terms of assembly, monomer.

The protein localises to the cytoplasm. The enzyme catalyses tRNA(Glu) + L-glutamate + ATP = L-glutamyl-tRNA(Glu) + AMP + diphosphate. Functionally, catalyzes the attachment of glutamate to tRNA(Glu) in a two-step reaction: glutamate is first activated by ATP to form Glu-AMP and then transferred to the acceptor end of tRNA(Glu). The protein is Glutamate--tRNA ligase 1 of Campylobacter jejuni subsp. jejuni serotype O:2 (strain ATCC 700819 / NCTC 11168).